A 363-amino-acid chain; its full sequence is Fructose-bisphosphate aldolase A (363 aa).

Residue arginine 43 coordinates beta-D-fructose 1,6-bisphosphate. Glutamate 188 functions as the Proton acceptor in the catalytic mechanism. Catalysis depends on lysine 230, which acts as the Schiff-base intermediate with dihydroxyacetone-P. Residues 272–274 (SGG), serine 301, and arginine 304 contribute to the beta-D-fructose 1,6-bisphosphate site.

It belongs to the class I fructose-bisphosphate aldolase family. In terms of assembly, tetramer.

It carries out the reaction beta-D-fructose 1,6-bisphosphate = D-glyceraldehyde 3-phosphate + dihydroxyacetone phosphate. It participates in carbohydrate degradation; glycolysis; D-glyceraldehyde 3-phosphate and glycerone phosphate from D-glucose: step 4/4. Plays a key role in glycolysis and gluconeogenesis. This Salmo salar (Atlantic salmon) protein is Fructose-bisphosphate aldolase A.